The following is a 189-amino-acid chain: Tumor protein p53-inducible protein 11 (189 aa).

Topologically, residues 1 to 63 (MAAKQPPPLM…FAVREPLGLR (63 aa)) are cytoplasmic. Position 14 is a phosphoserine (S14). Residues 64 to 84 (VWQFVSAVLFSGIAIMALAFP) form a helical membrane-spanning segment. Residues 85 to 108 (DQLYDAVFDGAQVTSKTPIRLYGG) are Extracellular-facing. A helical transmembrane segment spans residues 109–129 (ALLSISLIMWNALYTAEKVII). Residue R130 is a topological domain, cytoplasmic. Residues 131-151 (WTLLTEACYFSVQFLVVTATL) form a helical membrane-spanning segment. Over 152–159 (AETGLASQ) the chain is Extracellular. A helical transmembrane segment spans residues 160–180 (GILLLLASRLLFVAISVYYYY). Topologically, residues 181 to 189 (QVGRKPKKV) are cytoplasmic.

It is found in the membrane. The chain is Tumor protein p53-inducible protein 11 (TP53I11) from Bos taurus (Bovine).